Here is a 387-residue protein sequence, read N- to C-terminus: Cyclin-B1-4 (387 aa).

Positions 1 to 29 are disordered; it reads MASSRVSDLPHQRGIAGEIKPKNVAGHGR.

Belongs to the cyclin family. Cyclin AB subfamily.

This Arabidopsis thaliana (Mouse-ear cress) protein is Cyclin-B1-4 (CYCB1-4).